We begin with the raw amino-acid sequence, 623 residues long: Transketolase (623 aa).

N-acetylmethionine is present on Met-1. Lys-6 and Lys-11 each carry N6-acetyllysine. Residue His-37 coordinates substrate. Ser-40 and His-77 together coordinate thiamine diphosphate. Ser-104 is subject to Phosphoserine. Residue 123–125 (GSL) coordinates thiamine diphosphate. Position 144 is an N6-acetyllysine (Lys-144). Position 155 (Asp-155) interacts with Mg(2+). Positions 156 and 185 each coordinate thiamine diphosphate. Positions 185 and 187 each coordinate Mg(2+). 3 positions are modified to N6-acetyllysine: Lys-204, Lys-232, and Lys-241. Thiamine diphosphate contacts are provided by Lys-244 and His-258. His-258 lines the substrate pocket. Lys-260 is subject to N6-acetyllysine. Position 275 is a phosphotyrosine (Tyr-275). Position 287 is a phosphothreonine (Thr-287). Ser-295 bears the Phosphoserine mark. Arg-318 is a substrate binding site. Lys-352 is covalently cross-linked (Glycyl lysine isopeptide (Lys-Gly) (interchain with G-Cter in SUMO2)). Residue Glu-366 is the Proton donor of the active site. Phe-392 is a thiamine diphosphate binding site. Substrate is bound by residues His-416 and Asp-424. Gln-428 contributes to the thiamine diphosphate binding site. Arg-474 contacts substrate. Lys-538 and Lys-603 each carry N6-acetyllysine.

It belongs to the transketolase family. As to quaternary structure, homodimer. Mg(2+) is required as a cofactor. The cofactor is Ca(2+). Requires Mn(2+) as cofactor. Co(2+) serves as cofactor. It depends on thiamine diphosphate as a cofactor.

The catalysed reaction is D-sedoheptulose 7-phosphate + D-glyceraldehyde 3-phosphate = aldehydo-D-ribose 5-phosphate + D-xylulose 5-phosphate. Its function is as follows. Catalyzes the transfer of a two-carbon ketol group from a ketose donor to an aldose acceptor, via a covalent intermediate with the cofactor thiamine pyrophosphate. In Pongo abelii (Sumatran orangutan), this protein is Transketolase (TKT).